The following is a 511-amino-acid chain: UDP-N-acetylmuramoyl-L-alanyl-D-glutamate--2,6-diaminopimelate ligase (511 aa).

Position 33 (Ser-33) interacts with UDP-N-acetyl-alpha-D-muramoyl-L-alanyl-D-glutamate. Position 118–124 (118–124) interacts with ATP; it reads GTNGKTT. UDP-N-acetyl-alpha-D-muramoyl-L-alanyl-D-glutamate is bound by residues 160–161, Ser-187, Gln-193, and Arg-195; that span reads TT. Lys-227 carries the N6-carboxylysine modification. Residues Arg-403, 427-430, Gly-478, and Glu-482 contribute to the meso-2,6-diaminopimelate site; that span reads DNPR. Positions 427 to 430 match the Meso-diaminopimelate recognition motif motif; that stretch reads DNPR.

Belongs to the MurCDEF family. MurE subfamily. Mg(2+) serves as cofactor. Carboxylation is probably crucial for Mg(2+) binding and, consequently, for the gamma-phosphate positioning of ATP.

It is found in the cytoplasm. The enzyme catalyses UDP-N-acetyl-alpha-D-muramoyl-L-alanyl-D-glutamate + meso-2,6-diaminopimelate + ATP = UDP-N-acetyl-alpha-D-muramoyl-L-alanyl-gamma-D-glutamyl-meso-2,6-diaminopimelate + ADP + phosphate + H(+). Its pathway is cell wall biogenesis; peptidoglycan biosynthesis. Catalyzes the addition of meso-diaminopimelic acid to the nucleotide precursor UDP-N-acetylmuramoyl-L-alanyl-D-glutamate (UMAG) in the biosynthesis of bacterial cell-wall peptidoglycan. This Prochlorococcus marinus subsp. pastoris (strain CCMP1986 / NIES-2087 / MED4) protein is UDP-N-acetylmuramoyl-L-alanyl-D-glutamate--2,6-diaminopimelate ligase.